The sequence spans 201 residues: Pro-P-factor (201 aa).

The first 20 residues, 1 to 20 (MKITAVIALLFSLAAASPIP), serve as a signal peptide directing secretion. 5 propeptides span residues 21–31 (VADPGVVSVSK), 58–65 (EFEAAPAK), 92–99 (EFEAAPEK), 126–133 (EFEAAPAK), and 160–201 (TEED…KFES). N-linked (GlcNAc...) asparagine glycans are attached at residues Asn-187 and Asn-194.

In terms of processing, proteolytically cleaved by kpr, probably at the C-terminal side of dibasic Lys-Arg residues. Post-translationally, glycosylated. Most of the precursor molecules are glycosylated on at least one site, but only a small proportion are glycosylated on both sites.

The protein resides in the secreted. Its function is as follows. In h- cells under nutritional starvation, P-factor induces alteration of cell morphology toward mating, arrest of the cell cycle at the G1 phase prior to the initiation of DNA synthesis and indirect transcriptional activation of the sxa2 gene which down-regulates the signaling pathway. In Schizosaccharomyces pombe (strain 972 / ATCC 24843) (Fission yeast), this protein is Pro-P-factor (map2).